The following is a 244-amino-acid chain: MTVGLYLYGIFPEPIPDGLVLQGIDNEPVHSEMIDGFSFLYSAAHKEKYLASRRYLICHEKVLETVMEAGFTTLLPLRFGLVIKTWESVTEQLITPYKTQLKELFAKLSGQREVSIKIFWDNQWELQAALESNPKLKQERDAMMGKNLNMEEIIHIGQLIEATVLRRKQDIIQVFRDQLNHRAQEVIESDPMTDDMIYNAAYLIPWEQEPEFSQNVEAIDQQFGDRLRIRYNNLTAPYTFAQLI.

Residues 1–109 (MTVGLYLYGI…QLKELFAKLS (109 aa)) form an N-terminus region. A C-terminus, modifed ferredoxin fold region spans residues 110–233 (GQREVSIKIF…GDRLRIRYNN (124 aa)). The segment at 234-244 (LTAPYTFAQLI) is C-tail.

It belongs to the gas vesicle GvpF/GvpL family. As to quaternary structure, binds GvpA.

The protein resides in the gas vesicle. In terms of biological role, a minor component of the gas vesicle, may be involved in preventing GvpA aggregation during gas vesicle nucleation. Gas vesicles (GV) are hollow, gas filled proteinaceous nanostructures. During planktonic growth they allow positioning of the organism at a favorable depth for light or nutrient acquisition. The chain is Gas vesicle protein F from Microcystis aeruginosa (strain PCC 7806).